Consider the following 63-residue polypeptide: Venom peptide U-reduvitoxin-Pp19 (63 aa).

Residues 1–23 form the signal peptide; sequence MSPYSILFVVVIALCLLPESIVG. Disulfide bonds link Cys-15/Cys-62, Cys-25/Cys-53, and Cys-30/Cys-61.

Hemolymph (at protein level). Also weakly expressed by the venom gland (at protein level).

Its subcellular location is the secreted. Functionally, toxin with insecticidal activity. High doses of recombinant toxin causes impaired motor behavior of D.melanogaster, which progress slowly to paralysis and death after several hours. The polypeptide is Venom peptide U-reduvitoxin-Pp19 (Pristhesancus plagipennis (Common assassin bug)).